The chain runs to 318 residues: tRNA-dihydrouridine(16) synthase (318 aa).

Residues 7 to 9 and Q68 contribute to the FMN site; that span reads PME. Residue C98 is the Proton donor of the active site. FMN-binding positions include K139, 200-202, and 224-225; these read NGE and CR.

This sequence belongs to the Dus family. DusC subfamily. Requires FMN as cofactor.

It catalyses the reaction 5,6-dihydrouridine(16) in tRNA + NADP(+) = uridine(16) in tRNA + NADPH + H(+). The catalysed reaction is 5,6-dihydrouridine(16) in tRNA + NAD(+) = uridine(16) in tRNA + NADH + H(+). Its function is as follows. Catalyzes the synthesis of 5,6-dihydrouridine (D), a modified base found in the D-loop of most tRNAs, via the reduction of the C5-C6 double bond in target uridines. Specifically modifies U16 in tRNAs. The polypeptide is tRNA-dihydrouridine(16) synthase (Vibrio vulnificus (strain CMCP6)).